The chain runs to 44 residues: Thymosin beta-4 (44 aa).

The span at methionine 1 to glutamate 25 shows a compositional bias: basic and acidic residues. The disordered stretch occupies residues methionine 1 to serine 44. At alanine 2 the chain carries N-acetylalanine. Lysine 4 carries the N6-acetyllysine modification. At lysine 12 the chain carries N6-acetyllysine; alternate. A Glycyl lysine isopeptide (Lys-Gly) (interchain with G-Cter in SUMO2); alternate cross-link involves residue lysine 12. Threonine 23 is subject to Phosphothreonine. Lysine 26 is modified (N6-acetyllysine). At serine 31 the chain carries Phosphoserine. N6-acetyllysine is present on lysine 32. The span at glutamate 33–serine 44 shows a compositional bias: basic and acidic residues. Phosphothreonine is present on threonine 34. Lysine 39 carries the N6-acetyllysine modification.

The protein belongs to the thymosin beta family. In terms of tissue distribution, originally found in thymus but it is widely distributed in many tissues.

It is found in the cytoplasm. Its subcellular location is the cytoskeleton. Plays an important role in the organization of the cytoskeleton. Binds to and sequesters actin monomers (G actin) and therefore inhibits actin polymerization. Its function is as follows. Seraspenide inhibits the entry of hematopoietic pluripotent stem cells into the S-phase. This chain is Thymosin beta-4 (TMSB4), found in Oryctolagus cuniculus (Rabbit).